We begin with the raw amino-acid sequence, 356 residues long: Glutenin, low molecular weight subunit (356 aa).

Residues 1 to 19 (MKTFLVFALLALAAASAVA) form the signal peptide. Residues 20–179 (QISQQQQAPP…LQQQRPPFSR (160 aa)) form a disordered region.

It belongs to the gliadin/glutenin family. In terms of assembly, disulfide-bridge linked aggregates.

Glutenins are high-molecular weight seed storage proteins of wheat endosperm. Thought to be responsible for the visco-elastic property of wheat dough. The protein is Glutenin, low molecular weight subunit of Triticum aestivum (Wheat).